A 224-amino-acid chain; its full sequence is UPF0758 protein PSPTO_0086 (224 aa).

The 123-residue stretch at Ala-102–Met-224 folds into the MPN domain. Residues His-173, His-175, and Asp-186 each contribute to the Zn(2+) site. Residues His-173–Asp-186 carry the JAMM motif motif.

The protein belongs to the UPF0758 family.

This is UPF0758 protein PSPTO_0086 from Pseudomonas syringae pv. tomato (strain ATCC BAA-871 / DC3000).